A 92-amino-acid polypeptide reads, in one-letter code: Large ribosomal subunit protein bL36m (92 aa).

The N-terminal 54 residues, 1-54 (MASLGRKFFAVGVLSRVFPSAFNAQKGLLKNASMFLTPAFRLSPSLLPWNFSRG), are a transit peptide targeting the mitochondrion.

Belongs to the bacterial ribosomal protein bL36 family. In terms of assembly, component of the mitochondrial large ribosomal subunit (mt-LSU). Mature yeast 74S mitochondrial ribosomes consist of a small (37S) and a large (54S) subunit. The 37S small subunit contains a 15S ribosomal RNA (15S mt-rRNA) and at least 32 different proteins. The 54S large subunit contains a 21S rRNA (21S mt-rRNA) and at least 45 different proteins. bL36m has a zinc binding site.

The protein resides in the mitochondrion. Its function is as follows. Component of the mitochondrial ribosome (mitoribosome), a dedicated translation machinery responsible for the synthesis of mitochondrial genome-encoded proteins, including at least some of the essential transmembrane subunits of the mitochondrial respiratory chain. The mitoribosomes are attached to the mitochondrial inner membrane and translation products are cotranslationally integrated into the membrane. bL36m may be involved in a process influencing telomere capping. The sequence is that of Large ribosomal subunit protein bL36m (rtc6) from Schizosaccharomyces pombe (strain 972 / ATCC 24843) (Fission yeast).